The primary structure comprises 203 residues: tRNA (pseudouridine(54)-N(1))-methyltransferase (203 aa).

Residues Leu-135 and Gly-156 each coordinate S-adenosyl-L-methionine.

It belongs to the methyltransferase superfamily. TrmY family. As to quaternary structure, homodimer.

The protein localises to the cytoplasm. The enzyme catalyses pseudouridine(54) in tRNA + S-adenosyl-L-methionine = N(1)-methylpseudouridine(54) in tRNA + S-adenosyl-L-homocysteine + H(+). Specifically catalyzes the N1-methylation of pseudouridine at position 54 (Psi54) in tRNAs. This chain is tRNA (pseudouridine(54)-N(1))-methyltransferase, found in Thermococcus onnurineus (strain NA1).